Here is a 107-residue protein sequence, read N- to C-terminus: Thioredoxin (107 aa).

A Thioredoxin domain is found at 2-107; the sequence is PSPIQVTDFS…TLTNALKKYL (106 aa). Catalysis depends on nucleophile residues Cys32 and Cys35. A disulfide bond links Cys32 and Cys35.

This sequence belongs to the thioredoxin family.

It is found in the plastid. It localises to the chloroplast. In terms of biological role, participates in various redox reactions through the reversible oxidation of its active center dithiol to a disulfide and catalyzes dithiol-disulfide exchange reactions. This chain is Thioredoxin (trxA), found in Cyanidium caldarium (Red alga).